Here is a 138-residue protein sequence, read N- to C-terminus: Ribosome-binding factor A (138 aa).

Belongs to the RbfA family. Monomer. Binds 30S ribosomal subunits, but not 50S ribosomal subunits or 70S ribosomes.

The protein localises to the cytoplasm. One of several proteins that assist in the late maturation steps of the functional core of the 30S ribosomal subunit. Associates with free 30S ribosomal subunits (but not with 30S subunits that are part of 70S ribosomes or polysomes). Required for efficient processing of 16S rRNA. May interact with the 5'-terminal helix region of 16S rRNA. The polypeptide is Ribosome-binding factor A (Paracoccus denitrificans (strain Pd 1222)).